A 115-amino-acid chain; its full sequence is Large ribosomal subunit protein uL18 (115 aa).

This sequence belongs to the universal ribosomal protein uL18 family. In terms of assembly, part of the 50S ribosomal subunit; part of the 5S rRNA/L5/L18/L25 subcomplex. Contacts the 5S and 23S rRNAs.

In terms of biological role, this is one of the proteins that bind and probably mediate the attachment of the 5S RNA into the large ribosomal subunit, where it forms part of the central protuberance. The protein is Large ribosomal subunit protein uL18 of Mycoplasma genitalium (strain ATCC 33530 / DSM 19775 / NCTC 10195 / G37) (Mycoplasmoides genitalium).